A 117-amino-acid chain; its full sequence is UPF0122 protein Dred_2057 (117 aa).

It belongs to the UPF0122 family.

In terms of biological role, might take part in the signal recognition particle (SRP) pathway. This is inferred from the conservation of its genetic proximity to ftsY/ffh. May be a regulatory protein. The polypeptide is UPF0122 protein Dred_2057 (Desulforamulus reducens (strain ATCC BAA-1160 / DSM 100696 / MI-1) (Desulfotomaculum reducens)).